A 506-amino-acid polypeptide reads, in one-letter code: UDP-N-acetylglucosamine--peptide N-acetylglucosaminyltransferase GtfA subunit (506 aa).

16 to 19 (GVEY) provides a ligand contact to UDP. H241 serves as a coordination point for N-acetyl-D-glucosamine. UDP is bound at residue 384–385 (HK). Position 404–407 (404–407 (EGFG)) interacts with N-acetyl-D-glucosamine.

The protein belongs to the glycosyltransferase group 1 family. Glycosyltransferase 4 subfamily. Interacts with stabilizing protein GtfB (Gtf2), probably as a heterotetramer with 2 subunits each of GtfA and GtfB, part of the accessory SecA2/SecY2 protein translocation apparatus.

It is found in the cytoplasm. It localises to the cell membrane. It carries out the reaction L-seryl-[protein] + UDP-N-acetyl-alpha-D-glucosamine = 3-O-[N-acetyl-alpha-D-glucosaminyl]-L-seryl-[protein] + UDP + H(+). The protein operates within protein modification; protein glycosylation. Its function is as follows. Required for polymorphic O-glycosylation of the serine-rich repeat protein Srr2. Catalyzes the first step in glycosylation by transferring N-acetylglucosamine from UDP-GlcNAc to serine residues of Srr2. Part of the accessory SecA2/SecY2 system specifically required to export serine-rich repeat proteins, probably Srr2 in this organism. The GtfA-GtfB (Gtf1-Gtf2 in this bacteria) complex adds GlcNAc from UDP-GlcNAc to Srr2 substrate. This subunit has low glycosyltransferase activity; GtfB enhances glycosyltransferase activity in vitro. Upon expression in S.parasanguis GtfA/GtfB restores expression of serine-rich repeat protein Fap1 and complements a biofilm formation defect. The sequence is that of UDP-N-acetylglucosamine--peptide N-acetylglucosaminyltransferase GtfA subunit from Streptococcus agalactiae.